Reading from the N-terminus, the 126-residue chain is uncharacterized protein (126 aa).

The next 3 membrane-spanning stretches (helical) occupy residues 4-24, 42-62, and 64-84; these read LIIA…VNIL, AITI…IINP, and ISAS…SYTV.

It is found in the membrane. This is an uncharacterized protein from Saccharomyces cerevisiae (strain ATCC 204508 / S288c) (Baker's yeast).